We begin with the raw amino-acid sequence, 195 residues long: MAPVSPTDFPQQCHGAVVGLGGNIGPVLDNLQGAIAELALVAGIEVERCSSWYRSRAFGPPQPDYINGCVTLRVSLSPPELLQTLLAIEQKFGRIRLEKWGPRTLDLDLIFYGDRQLEQARLTIPHPQMQYRPFVLVPLAEIAPDWVDPRSGKTIIQLIEQVDCTAVWPVAPGLELGGSLEPEQVFAPGAVAVHG.

Belongs to the HPPK family.

The enzyme catalyses 6-hydroxymethyl-7,8-dihydropterin + ATP = (7,8-dihydropterin-6-yl)methyl diphosphate + AMP + H(+). It participates in cofactor biosynthesis; tetrahydrofolate biosynthesis; 2-amino-4-hydroxy-6-hydroxymethyl-7,8-dihydropteridine diphosphate from 7,8-dihydroneopterin triphosphate: step 4/4. Catalyzes the transfer of pyrophosphate from adenosine triphosphate (ATP) to 6-hydroxymethyl-7,8-dihydropterin, an enzymatic step in folate biosynthesis pathway. This chain is 2-amino-4-hydroxy-6-hydroxymethyldihydropteridine pyrophosphokinase (folK), found in Synechocystis sp. (strain ATCC 27184 / PCC 6803 / Kazusa).